The chain runs to 523 residues: NAD(P)H-quinone oxidoreductase subunit 2 (523 aa).

13 helical membrane-spanning segments follow: residues 29-49 (AVLPEGAVLLAMIATLLVDLA), 57-77 (WVPPICYIGLGSALVLLALQW), 94-114 (LAVAFRAVIATSTLLSLLISW), 132-152 (LAATLGAMLLCGATDLVSIFI), 182-202 (LLVGSAAAAVFLYGASLLYGL), 221-241 (PIAALSLVFVLATVAFKIAAV), 255-275 (PTPVVAFLSVGSKAAGFALAL), 291-311 (LLFTVLAVLSMTLGNVVALAQ), 317-337 (MLAYSSIGQAGFVMIGMVCGT), 345-365 (VLYMAAYLFMNLGAFACIILF), 389-409 (LGLSLCLLSLGGIPPMLGFFG), 424-444 (LLVVVGLITSVISIYYYISVI), and 477-497 (VALIGCVGVTAIGGILSNPLF).

It belongs to the complex I subunit 2 family. As to quaternary structure, NDH-1 can be composed of about 15 different subunits; different subcomplexes with different compositions have been identified which probably have different functions.

Its subcellular location is the cellular thylakoid membrane. The catalysed reaction is a plastoquinone + NADH + (n+1) H(+)(in) = a plastoquinol + NAD(+) + n H(+)(out). It catalyses the reaction a plastoquinone + NADPH + (n+1) H(+)(in) = a plastoquinol + NADP(+) + n H(+)(out). Its function is as follows. NDH-1 shuttles electrons from an unknown electron donor, via FMN and iron-sulfur (Fe-S) centers, to quinones in the respiratory and/or the photosynthetic chain. The immediate electron acceptor for the enzyme in this species is believed to be plastoquinone. Couples the redox reaction to proton translocation, and thus conserves the redox energy in a proton gradient. Cyanobacterial NDH-1 also plays a role in inorganic carbon-concentration. The sequence is that of NAD(P)H-quinone oxidoreductase subunit 2 from Synechococcus sp. (strain CC9902).